Here is a 287-residue protein sequence, read N- to C-terminus: Homoserine kinase (287 aa).

Pro79–Ser89 lines the ATP pocket.

This sequence belongs to the GHMP kinase family. Homoserine kinase subfamily.

The protein resides in the cytoplasm. The enzyme catalyses L-homoserine + ATP = O-phospho-L-homoserine + ADP + H(+). It functions in the pathway amino-acid biosynthesis; L-threonine biosynthesis; L-threonine from L-aspartate: step 4/5. Catalyzes the ATP-dependent phosphorylation of L-homoserine to L-homoserine phosphate. The sequence is that of Homoserine kinase from Enterococcus faecalis (strain ATCC 700802 / V583).